A 409-amino-acid chain; its full sequence is Menaquinone reductase (409 aa).

FAD is bound by residues 11–15 (GAGPA), 44–47 (CGDG), Arg101, Val125, Asp288, and 300–301 (GI).

This sequence belongs to the geranylgeranyl reductase family. Requires FAD as cofactor.

The catalysed reaction is menaquinone-9 + AH2 = beta-dihydromenaquinone-9 + A. Its pathway is quinol/quinone metabolism; menaquinone biosynthesis. Functionally, catalyzes the reduction of a single double bond in the isoprenoid tail of menaquinone (MK-9) in M.smegmatis, likely the beta-isoprene unit, forming the predominant form of menaquinone found in mycobacteria, MK-9(II-H2). In Mycolicibacterium smegmatis (strain ATCC 700084 / mc(2)155) (Mycobacterium smegmatis), this protein is Menaquinone reductase.